We begin with the raw amino-acid sequence, 816 residues long: Phosphatidylinositol 4-kinase beta (816 aa).

3 disordered regions span residues 1 to 30 (MGDTVVEPAPLKPTSEPTSGPPGNNGGSLL), 101 to 120 (EDEMGATVASGTAKGARRRR), and 248 to 318 (AHRK…SFSS). N-acetylglycine is present on Gly2. Residues 2-68 (GDTVVEPAPL…VKLLHGGMAV (67 aa)) form an interaction with ACBD3 region. The 191-residue stretch at 52–242 (CQDVLEKVKL…GTKLRKLILS (191 aa)) folds into the PIK helical domain. Position 258 is a phosphoserine (Ser258). Thr263 is modified (phosphothreonine). 5 positions are modified to phosphoserine: Ser266, Ser275, Ser277, Ser284, and Ser294. Composition is skewed to polar residues over residues 278–297 (DATASISLSSNLKRTASNPK) and 306–318 (SSSTESIDNSFSS). Phosphoserine is present on Ser428. At Thr438 the chain carries Phosphothreonine. Position 511 is a phosphoserine (Ser511). A phosphothreonine mark is found at Thr517 and Thr519. Positions 535–801 (EPWQEKVRRI…MVDGSMRSIT (267 aa)) constitute a PI3K/PI4K catalytic domain. The interval 541–547 (VRRIREG) is G-loop. The tract at residues 668 to 676 (QVKDRHNGN) is catalytic loop. The activation loop stretch occupies residues 687 to 711 (HIDFGFILSSSPRNLGFETSAFKLT).

Belongs to the PI3/PI4-kinase family. Type III PI4K subfamily. Interacts with ARF1 and ARF3 in the Golgi complex, but not with ARF4, ARF5 or ARF6. Interacts with NCS1/FREQ in a calcium-independent manner. Interacts with CALN1/CABP8 and CALN2/CABP7; in a calcium-dependent manner; this interaction competes with NCS1/FREQ binding. Interacts with ACBD3. Interacts with ARMH3, YWHAB, YWHAE, YWHAG, YWHAH, YWHAQ, YWHAZ and SFN. Interacts with GGA2 (via VHS domain); the interaction is important for PI4KB location at the Golgi apparatus membrane. Interacts with ATG9A. The cofactor is Mg(2+). Requires Mn(2+) as cofactor.

It is found in the endomembrane system. It localises to the mitochondrion outer membrane. The protein localises to the rough endoplasmic reticulum membrane. Its subcellular location is the golgi apparatus. The protein resides in the golgi apparatus membrane. It catalyses the reaction a 1,2-diacyl-sn-glycero-3-phospho-(1D-myo-inositol) + ATP = a 1,2-diacyl-sn-glycero-3-phospho-(1D-myo-inositol 4-phosphate) + ADP + H(+). Inhibited by wortmannin. Increased kinase activity upon interaction with NCS1/FREQ. In terms of biological role, phosphorylates phosphatidylinositol (PI) in the first committed step in the production of the second messenger inositol-1,4,5,-trisphosphate (PIP). May regulate Golgi disintegration/reorganization during mitosis, possibly via its phosphorylation. Involved in Golgi-to-plasma membrane trafficking. This chain is Phosphatidylinositol 4-kinase beta (PI4KB), found in Plecturocebus moloch (Dusky titi monkey).